Here is a 788-residue protein sequence, read N- to C-terminus: MAEKLQNLELSSEELDRFTKAFQDPKFREMFVQYAEEIRDPENRRKYEQEISQMESERGMDIKFIHPKPGYVLLTSVNGVQKCYLNICSNDLLQKPECKPGKDGEGKAGLHWSLPYSLSAGREDLGKDGSKHVIYDVVFHPDTLHIASKNEKFKMIVDSTSLEAVASQFDVKLDKANVRTLSMKYKGVPNPSVLRKPLLGTTPKHGDPEDPLSFPYPYDVPTAVGKEKKDQKRVIKEEHKQHVTTSEQDPDIQIATTPNYTVRHRSYVDLQDFRDSRDSTPSPVPKELVITVDLPLLNSAESVNLHIAGKNLSLESEKPAYKLNVKLPYVVEDNQGKAQFNKARRQLIITVPVIQHNILTLMQDHFEEARGEKDLRGAESSVLHEEYTDNGSRTSACGTENKLEPLISCLNEEENNSEGLTSESNLDTGAPYLPEISPNQNTLDREEVVYGLTEDVPSMPSDTLVCPTFSCSQDPTSLTLIAHVRDIDENSISTDVGSNHYHIRCSVKQSTSSYDLLVTFLPHDIINPNEVYVNISENNALIGLTKSPESVGFWKMLYFGVSGQPLQERRFVSEDNINEVLACSIPLSQVSPSTQEHQPLIEVLEMTDERTHIRINKPKTECVVSAEHKEHCTDHSEHERDVGVERSNIAVGDTTEHYSNQVSPCRENTELDRDHTSERYEEPESTSCTGESTSDQQQKDSNLVFPGDSSAENKMACLKSSEQTTQESDLAEDDMPDRSDHTQNFDSRPASSSVLKEIGKKDGSVQVISDHTTQCPFQFQNSLLFDLD.

Disordered stretches follow at residues 194 to 249, 415 to 438, and 628 to 754; these read LRKP…SEQD, NNSE…EISP, and HKEH…SSSV. The span at 225-241 shows a compositional bias: basic and acidic residues; sequence GKEKKDQKRVIKEEHKQ. The segment covering 417–427 has biased composition (polar residues); it reads SEGLTSESNLD. Basic and acidic residues-rich tracts occupy residues 628-644 and 667-682; these read HKEH…DVGV and ENTE…RYEE. Polar residues-rich tracts occupy residues 685-701 and 744-754; these read STSC…QKDS and NFDSRPASSSV.

Belongs to the PIH1 family. Kintoun subfamily.

Its subcellular location is the cytoplasm. The protein resides in the dynein axonemal particle. Its function is as follows. Required for cytoplasmic pre-assembly of axonemal dyneins, thereby playing a central role in motility in cilia and flagella. Involved in pre-assembly of dynein arm complexes in the cytoplasm before intraflagellar transport loads them for the ciliary compartment. The protein is Protein kintoun of Xenopus laevis (African clawed frog).